A 224-amino-acid polypeptide reads, in one-letter code: uncharacterized protein (224 aa).

Residues 9–68 (SKMVDVNEITKYLPGFNCGACGYKRCDLFAEALLNKDVKLEDCPFLLRERFKENYEKLKE) form the 4Fe-4S domain. Positions 26, 29, 34, and 51 each coordinate [4Fe-4S] cluster.

[4Fe-4S] cluster is required as a cofactor.

This is an uncharacterized protein from Methanocaldococcus jannaschii (strain ATCC 43067 / DSM 2661 / JAL-1 / JCM 10045 / NBRC 100440) (Methanococcus jannaschii).